The primary structure comprises 754 residues: Condensin complex subunit 2 (754 aa).

Residues 104 to 149 form a disordered region; it reads LAQRKTNGASNGDDSNGGNGEGLGGDSDEANIEIDPLTGMPISNDP. A compositionally biased stretch (gly residues) spans 118–128; it reads SNGGNGEGLGG. Ser245 is modified (phosphoserine). The segment at 359–379 is disordered; that stretch reads CYPDENHDNTSHDEQDDDNVN. Over residues 362 to 371 the composition is skewed to basic and acidic residues; sequence DENHDNTSHD. At Ser548 the chain carries Phosphoserine. Residues 665 to 688 form a disordered region; the sequence is HDSRKNREQSSNDSETHTEDESTK.

It belongs to the CND2 (condensin subunit 2) family. In terms of assembly, component of the condensin complex, which contains the SMC2 and SMC4 heterodimer, and three non SMC subunits that probably regulate the complex: BRN1, YCS4 and YCG1/YCS5.

It is found in the nucleus. Its subcellular location is the cytoplasm. The protein localises to the chromosome. Its function is as follows. Regulatory subunit of the condensin complex, a complex required for conversion of interphase chromatin into mitotic-like condense chromosomes. The condensin complex probably introduces positive supercoils into relaxed DNA in the presence of type I topoisomerases and converts nicked DNA into positive knotted forms in the presence of type II topoisomerases. The condensin complex probably also plays a role during interphase. The protein is Condensin complex subunit 2 (BRN1) of Saccharomyces cerevisiae (strain ATCC 204508 / S288c) (Baker's yeast).